We begin with the raw amino-acid sequence, 769 residues long: MINRQYFIWYIFIFNIINKIYFENIRYVKNYEVVIRKKKNIERGIGNDFAFIRRYYKSRLLSDVSYKNNSIKGKNRVDKEGDIKKYDNNDDNKMDNSYDYKNKSIKENETKIRKEQVISLDKRYNRNINEKEEIKKKIKDIQRKRLIIYFKQDNTILSSRNYKHIFMKVLSSCGHIEKLTFINFYLYEFPKSINNEDMLLKICLRLLESRRINVENDNQISHTVQMKSYNNNNNKWDNINSKNNCIYQIKDKIKDLPNVSPSASTFTSISTSPYTLKLRDRNKYANDKNHIFKINHSNKHKNNNNNNNNNDYHNNNKSNYHSHSSAKCQTQRLNKKMIGTNILDGYDIIQMEEGLNLSHNYELNDVNVCIIDTGIDENHIDLKDNIIEKKTFMKHSYKKYNIDGINNIESDNIDGINNIESDNIDGINNIESDNIDGINNIESDNIDGINNIESDNIDGINNIKSSDNIKSSDNIKSSDNINSSDNIKSSDNNNVHTMLRNKLYLKKKKECSNYNTSNDGHGHGTFIAGIIAGNSPKGKKGIKGISKKAKLIICKALNNNNAGYISDILECFNFCAKKKARIINASFASTTHYPSLFQALKELQDKDILVISSSGNCSSNSKCKQAFQECNLNIQKLYPAAYSADLNNIISVSNIIQQSNGNIVLSPDSCYSPNYVHLAAPGGNIISTFPNNKYAISSGTSFSASVITGLASLVLSINSNLTSQQVIELFKKSIVQTKSLENKVKWGGFINVYDLVRFTIDSLPKDKDE.

N-linked (GlcNAc...) asparagine glycosylation is found at asparagine 68, asparagine 102, asparagine 108, asparagine 295, asparagine 316, and asparagine 356. Basic residues predominate over residues lysine 293–asparagine 302. The segment at lysine 293–glutamine 329 is disordered. Over residues asparagine 303 to serine 325 the composition is skewed to low complexity. Positions glycine 345–valine 756 constitute a Peptidase S8 domain. The active-site Charge relay system is aspartate 372. Positions asparagine 468 to asparagine 493 are disordered. N-linked (GlcNAc...) asparagine glycans are attached at residues asparagine 482 and asparagine 515. Residue histidine 523 is the Charge relay system of the active site. N-linked (GlcNAc...) asparagine glycans are attached at residues asparagine 584 and asparagine 616. Serine 701 (charge relay system) is an active-site residue. An N-linked (GlcNAc...) asparagine glycan is attached at asparagine 720.

This sequence belongs to the peptidase S8 family.

Its subcellular location is the secreted. The enzyme catalyses Hydrolysis of proteins with broad specificity for peptide bonds, and a preference for a large uncharged residue in P1. Hydrolyzes peptide amides.. Serine protease which may cleave PFN/profilin. The sequence is that of Subtilisin-like protease 3 from Plasmodium falciparum (isolate 3D7).